We begin with the raw amino-acid sequence, 156 residues long: Cytochrome c-type biogenesis protein CcmE (156 aa).

The Cytoplasmic portion of the chain corresponds to 1-8 (MNPLRRKR). A helical; Signal-anchor for type II membrane protein membrane pass occupies residues 9-29 (LLIILAILAGVGIAVGLAMSA). The Periplasmic segment spans residues 30-156 (LRENINLFYT…RIRSLPRRAK (127 aa)). Residues His-124 and Tyr-128 each contribute to the heme site.

It belongs to the CcmE/CycJ family.

Its subcellular location is the cell inner membrane. Heme chaperone required for the biogenesis of c-type cytochromes. Transiently binds heme delivered by CcmC and transfers the heme to apo-cytochromes in a process facilitated by CcmF and CcmH. This chain is Cytochrome c-type biogenesis protein CcmE, found in Pseudomonas fluorescens.